The chain runs to 430 residues: Acylsugar acyltransferase 3 (430 aa).

Residues His-155 and Asp-367 each act as proton acceptor in the active site.

It belongs to the plant acyltransferase family. In terms of assembly, monomer. As to expression, expressed in tip cells of type I trichomes of stems and petioles, sites of acylsugars production.

Functionally, catalyzes the transfer of short (four to five carbons) branched acyl chains to the furanose ring of di-acylsucrose acceptors to produce tri-acylsucroses such as S3:15 (5,5,5), S4:17 (2,5,5,5) and S4:24 (2,5,5,12) acylsucroses. The polypeptide is Acylsugar acyltransferase 3 (Solanum lycopersicum (Tomato)).